Consider the following 742-residue polypeptide: F-box only protein 30 (742 aa).

The segment at 49-108 (EHRLLCPFERVPCLNSNFGCPFTLARNKVAEHLEMCPASVVCCTMEWNRWPVSYSDRKSY) adopts a TRAF-type zinc-finger fold. The tract at residues 214 to 242 (SLQGTTNEMDEESNRESSQDRNAKDQDHL) is disordered. The span at 225–242 (ESNRESSQDRNAKDQDHL) shows a compositional bias: basic and acidic residues. Serine 379 carries the phosphoserine modification. One can recognise an F-box domain in the interval 607 to 653 (SDHLSSLPFEVLQHIAGFLDGFSLCQLACVSRLMRDICGSLLQSRGM).

In terms of assembly, part of a SCF (SKP1-cullin-F-box) protein ligase complex. Interacts with SKP1, CUL1 and RBX1/ROC1. Auto-ubiquitinated. In terms of processing, may be neddylated. Neddylation may be required for E3 ligase activity.

It functions in the pathway protein modification; protein ubiquitination. Functionally, substrate-recognition component of the SCF (SKP1-CUL1-F-box protein)-type E3 ubiquitin ligase complex. Required for muscle atrophy following denervation. This Rattus norvegicus (Rat) protein is F-box only protein 30 (Fbxo30).